Consider the following 336-residue polypeptide: Ferredoxin--NADP reductase (336 aa).

FAD-binding residues include Glu34, Gln42, Tyr47, Val87, Phe121, Asp286, and Ser326.

It belongs to the ferredoxin--NADP reductase type 2 family. As to quaternary structure, homodimer. Requires FAD as cofactor.

The catalysed reaction is 2 reduced [2Fe-2S]-[ferredoxin] + NADP(+) + H(+) = 2 oxidized [2Fe-2S]-[ferredoxin] + NADPH. In Leuconostoc mesenteroides subsp. mesenteroides (strain ATCC 8293 / DSM 20343 / BCRC 11652 / CCM 1803 / JCM 6124 / NCDO 523 / NBRC 100496 / NCIMB 8023 / NCTC 12954 / NRRL B-1118 / 37Y), this protein is Ferredoxin--NADP reductase.